The chain runs to 96 residues: Secretoglobin family 2B member 2 (96 aa).

Residues 1–23 (MRVTSATCALLLALICSVQLGDA) form the signal peptide.

The protein belongs to the secretoglobin family.

The protein resides in the secreted. This chain is Secretoglobin family 2B member 2 (SCGB2B2), found in Homo sapiens (Human).